Consider the following 95-residue polypeptide: Co-chaperonin GroES (95 aa).

Belongs to the GroES chaperonin family. As to quaternary structure, heptamer of 7 subunits arranged in a ring. Interacts with the chaperonin GroEL.

It localises to the cytoplasm. In terms of biological role, together with the chaperonin GroEL, plays an essential role in assisting protein folding. The GroEL-GroES system forms a nano-cage that allows encapsulation of the non-native substrate proteins and provides a physical environment optimized to promote and accelerate protein folding. GroES binds to the apical surface of the GroEL ring, thereby capping the opening of the GroEL channel. This is Co-chaperonin GroES from Francisella philomiragia subsp. philomiragia (strain ATCC 25017 / CCUG 19701 / FSC 153 / O#319-036).